The chain runs to 217 residues: MRVLVASRNKKKLAELNRMLEAANVTGIELVGLGDLPEYPETPETGATFVDNARIKTNDGVRHTGLPTIADDSGLAVDALNGMPGVLSARWSGGHGDDKANNDLLLAQMGDVPDERRGAHFVSSCVLQLPAQVAAERGMETEYAVEGRWYGRVLRAEQGEGGFGYDPLFAPDELPEGQEEQLAGKSAGELTAEQKDAVSHRGKALRQLVEILAQLAD.

Position 7–12 (7–12) interacts with substrate; that stretch reads SRNKKK. Catalysis depends on Asp72, which acts as the Proton acceptor. Asp72 is a binding site for Mg(2+). Substrate contacts are provided by residues Ser73, 163–166, Lys195, and 200–201; these read FGYD and HR.

Belongs to the HAM1 NTPase family. In terms of assembly, homodimer. It depends on Mg(2+) as a cofactor.

It carries out the reaction XTP + H2O = XMP + diphosphate + H(+). The enzyme catalyses dITP + H2O = dIMP + diphosphate + H(+). It catalyses the reaction ITP + H2O = IMP + diphosphate + H(+). Pyrophosphatase that catalyzes the hydrolysis of nucleoside triphosphates to their monophosphate derivatives, with a high preference for the non-canonical purine nucleotides XTP (xanthosine triphosphate), dITP (deoxyinosine triphosphate) and ITP. Seems to function as a house-cleaning enzyme that removes non-canonical purine nucleotides from the nucleotide pool, thus preventing their incorporation into DNA/RNA and avoiding chromosomal lesions. The sequence is that of dITP/XTP pyrophosphatase from Corynebacterium jeikeium (strain K411).